Consider the following 1236-residue polypeptide: ATP-dependent helicase/nuclease subunit A (1236 aa).

One can recognise a UvrD-like helicase ATP-binding domain in the interval 2–457 (AHWTIEQEEA…VDLNKNFRSH (456 aa)). ATP is bound at residue 23–30 (AAAGSGKT). The UvrD-like helicase C-terminal domain occupies 515-816 (NTAKRVEICI…RIMSIHKSKG (302 aa)).

The protein belongs to the helicase family. AddA subfamily. In terms of assembly, heterodimer of AddA and AddB/RexB. Requires Mg(2+) as cofactor.

The catalysed reaction is Couples ATP hydrolysis with the unwinding of duplex DNA by translocating in the 3'-5' direction.. It catalyses the reaction ATP + H2O = ADP + phosphate + H(+). The heterodimer acts as both an ATP-dependent DNA helicase and an ATP-dependent, dual-direction single-stranded exonuclease. Recognizes the chi site generating a DNA molecule suitable for the initiation of homologous recombination. The AddA nuclease domain is required for chi fragment generation; this subunit has the helicase and 3' -&gt; 5' nuclease activities. In Syntrophomonas wolfei subsp. wolfei (strain DSM 2245B / Goettingen), this protein is ATP-dependent helicase/nuclease subunit A.